The chain runs to 100 residues: Osteocalcin (100 aa).

An N-terminal signal peptide occupies residues 1–23 (MRALTLLALLALAALCIAGQAGA). The propeptide occupies 24–51 (KPSGAESSKGAAFVSKQEGSEVVKRPRR). The Gla domain occupies 52–98 (YLYQWLGAPVPYPDTLEPRREVCELNPDCDELADHIGFQEAYRRFYG). Ca(2+) contacts are provided by glutamate 68, glutamate 72, glutamate 75, and aspartate 81. 4-carboxyglutamate is present on residues glutamate 68, glutamate 72, and glutamate 75. The cysteines at positions 74 and 80 are disulfide-linked.

The protein belongs to the osteocalcin/matrix Gla protein family. In terms of processing, gamma-carboxyglutamate residues are formed by vitamin K dependent carboxylation by GGCX. These residues are essential for the binding of calcium. Decarboxylation promotes the hormone activity.

Its subcellular location is the secreted. Functionally, the carboxylated form is one of the main organic components of the bone matrix, which constitutes 1-2% of the total bone protein: it acts as a negative regulator of bone formation and is required to limit bone formation without impairing bone resorption or mineralization. The carboxylated form binds strongly to apatite and calcium. In terms of biological role, the uncarboxylated form acts as a hormone secreted by osteoblasts, which regulates different cellular processes, such as energy metabolism, male fertility and brain development. Regulates of energy metabolism by acting as a hormone favoring pancreatic beta-cell proliferation, insulin secretion and sensitivity and energy expenditure. Uncarboxylated osteocalcin hormone also promotes testosterone production in the testes: acts as a ligand for G protein-coupled receptor GPRC6A at the surface of Leydig cells, initiating a signaling response that promotes the expression of enzymes required for testosterone synthesis in a CREB-dependent manner. Also acts as a regulator of brain development: osteocalcin hormone crosses the blood-brain barrier and acts as a ligand for GPR158 on neurons, initiating a signaling response that prevents neuronal apoptosis in the hippocampus, favors the synthesis of all monoamine neurotransmitters and inhibits that of gamma-aminobutyric acid (GABA). Osteocalcin also crosses the placenta during pregnancy and maternal osteocalcin is required for fetal brain development. The chain is Osteocalcin from Pan troglodytes (Chimpanzee).